Here is a 356-residue protein sequence, read N- to C-terminus: Peptide chain release factor 1 (356 aa).

N5-methylglutamine is present on Gln235.

It belongs to the prokaryotic/mitochondrial release factor family. In terms of processing, methylated by PrmC. Methylation increases the termination efficiency of RF1.

It localises to the cytoplasm. Its function is as follows. Peptide chain release factor 1 directs the termination of translation in response to the peptide chain termination codons UAG and UAA. The sequence is that of Peptide chain release factor 1 from Hydrogenobaculum sp. (strain Y04AAS1).